Consider the following 143-residue polypeptide: Holo-[acyl-carrier-protein] synthase (143 aa).

The Mg(2+) site is built by Asp-8 and Glu-62.

The protein belongs to the P-Pant transferase superfamily. AcpS family. The cofactor is Mg(2+).

The protein localises to the cytoplasm. It catalyses the reaction apo-[ACP] + CoA = holo-[ACP] + adenosine 3',5'-bisphosphate + H(+). Its function is as follows. Transfers the 4'-phosphopantetheine moiety from coenzyme A to a Ser of acyl-carrier-protein. The chain is Holo-[acyl-carrier-protein] synthase from Cupriavidus metallidurans (strain ATCC 43123 / DSM 2839 / NBRC 102507 / CH34) (Ralstonia metallidurans).